Here is a 325-residue protein sequence, read N- to C-terminus: N-acetyl-gamma-glutamyl-phosphate reductase (325 aa).

Residue cysteine 131 is part of the active site.

The protein belongs to the NAGSA dehydrogenase family. Type 1 subfamily.

The protein localises to the cytoplasm. It catalyses the reaction N-acetyl-L-glutamate 5-semialdehyde + phosphate + NADP(+) = N-acetyl-L-glutamyl 5-phosphate + NADPH + H(+). It participates in amino-acid biosynthesis; L-arginine biosynthesis; N(2)-acetyl-L-ornithine from L-glutamate: step 3/4. Functionally, catalyzes the NADPH-dependent reduction of N-acetyl-5-glutamyl phosphate to yield N-acetyl-L-glutamate 5-semialdehyde. The protein is N-acetyl-gamma-glutamyl-phosphate reductase of Methylobacterium sp. (strain 4-46).